The chain runs to 321 residues: Small ribosomal subunit protein mS43 (321 aa).

The transit peptide at methionine 1–tyrosine 13 directs the protein to the mitochondrion.

This sequence belongs to the mitochondrion-specific ribosomal protein mS43 family. Component of the mitochondrial small ribosomal subunit (mt-SSU). Mature yeast 74S mitochondrial ribosomes consist of a small (37S) and a large (54S) subunit. The 37S small subunit contains a 15S ribosomal RNA (15S mt-rRNA) and 34 different proteins. The 54S large subunit contains a 21S rRNA (21S mt-rRNA) and 46 different proteins. mS43 forms a heterodimer with mS42, building a large protuberance adjacent to the mRNA channel exit in the mt-SSU body.

The protein localises to the mitochondrion. Functionally, component of the mitochondrial ribosome (mitoribosome), a dedicated translation machinery responsible for the synthesis of mitochondrial genome-encoded proteins, including at least some of the essential transmembrane subunits of the mitochondrial respiratory chain. The mitoribosomes are attached to the mitochondrial inner membrane and translation products are cotranslationally integrated into the membrane. The chain is Small ribosomal subunit protein mS43 (MRP1) from Saccharomyces cerevisiae (strain ATCC 204508 / S288c) (Baker's yeast).